Reading from the N-terminus, the 154-residue chain is Ribonuclease H (154 aa).

The RNase H type-1 domain occupies 5–146; the sequence is EQNIVYLYCD…ADELANRGID (142 aa). Residues D14, E52, D74, and D138 each coordinate Mg(2+).

It belongs to the RNase H family. As to quaternary structure, monomer. Mg(2+) is required as a cofactor.

It localises to the cytoplasm. It carries out the reaction Endonucleolytic cleavage to 5'-phosphomonoester.. Functionally, endonuclease that specifically degrades the RNA of RNA-DNA hybrids. This chain is Ribonuclease H, found in Coxiella burnetii (strain CbuK_Q154) (Coxiella burnetii (strain Q154)).